Here is a 200-residue protein sequence, read N- to C-terminus: 3-isopropylmalate dehydratase small subunit (200 aa).

Belongs to the LeuD family. LeuD type 1 subfamily. In terms of assembly, heterodimer of LeuC and LeuD.

It catalyses the reaction (2R,3S)-3-isopropylmalate = (2S)-2-isopropylmalate. Its pathway is amino-acid biosynthesis; L-leucine biosynthesis; L-leucine from 3-methyl-2-oxobutanoate: step 2/4. Catalyzes the isomerization between 2-isopropylmalate and 3-isopropylmalate, via the formation of 2-isopropylmaleate. This chain is 3-isopropylmalate dehydratase small subunit, found in Actinobacillus pleuropneumoniae serotype 7 (strain AP76).